The following is a 202-amino-acid chain: MKPFVGLLGLLLLLSFMKTCADDWTAISLQCADHWFHLRIRPTIFHNIFMEPDEVFLGIGCPVTTTWPNDTYEFIYRTYSCGIANKVLCDVTLLKTQLTYISKNASLQAEMSLSCVMHNQSPHFCEAESRGDFTGDPPGWTEDMRARRDEQTVPMVQPNLSTSSEDHHVSTEPWASETSRSEAAEVPSFMDQNFSVFHFSRM.

The first 21 residues, 1–21 (MKPFVGLLGLLLLLSFMKTCA), serve as a signal peptide directing secretion. The tract at residues 157 to 183 (QPNLSTSSEDHHVSTEPWASETSRSEA) is disordered.

It belongs to the PLAC1 family. In terms of tissue distribution, expressed in oocytes in primary through antral-stage follicles. Expressed in liver and ovary.

The protein resides in the secreted. In terms of biological role, may be involved in cell differentiation. The chain is Oocyte-secreted protein 1 (Oosp1) from Mus musculus (Mouse).